The sequence spans 321 residues: Low affinity immunoglobulin epsilon Fc receptor (321 aa).

The Cytoplasmic portion of the chain corresponds to 1–21 (MEEGQYSEIEELPRRRCCRRG). Residues Cys17 and Cys18 are each lipidated (S-palmitoyl cysteine). The chain crosses the membrane as a helical; Signal-anchor for type II membrane protein span at residues 22-47 (TQIVLLGLVTAALWAGLLTLLLLWHW). The Extracellular portion of the chain corresponds to 48 to 321 (DTTQSLKQLE…LPTPSAPLHS (274 aa)). The N-linked (GlcNAc...) asparagine glycan is linked to Asn63. Positions 66–85 (QVSKNLESHHGDQMAQKSQS) are disordered. Repeats lie at residues 69–89 (KNLE…TQIS), 90–110 (QELE…LELS), and 111–131 (WNLN…LNER). 4 disulfides stabilise this stretch: Cys160–Cys288, Cys163–Cys174, Cys191–Cys282, and Cys259–Cys273. The region spanning 162-284 (TCPEKWINFQ…RKLGAWVCDR (123 aa)) is the C-type lectin domain. Positions 249, 251, 269, and 270 each coordinate Ca(2+). Positions 290–321 (PPASEGSAESMGPDSRPDPDGRLPTPSAPLHS) are disordered. An O-linked (Xyl...) (chondroitin sulfate) serine glycan is attached at Ser296.

Homotrimer. Interacts (via C-type lectin domain) with IGHE (via CH3 region); this interaction regulates IgE homeostasis. Interacts (via the C-terminus) with CR2/CD21 (via Sushi domain 1 and 2). In terms of processing, N- and O-glycosylated. The secreted form sCD23 is produced by ADAM10-mediated ectodomain shedding. As to expression, detected in urine (at protein level).

It localises to the cell membrane. Its subcellular location is the secreted. Its function is as follows. Low-affinity receptor for immunoglobulin E (IgE) and CR2/CD21. Has essential roles in the regulation of IgE production and in the differentiation of B cells. On B cells, initiates IgE-dependent antigen uptake and presentation to T cells. On macrophages, upon IgE binding and antigen cross-linking induces intracellular killing of parasites through activation of L-Arginine-nitric oxide pathway. The chain is Low affinity immunoglobulin epsilon Fc receptor (FCER2) from Homo sapiens (Human).